Reading from the N-terminus, the 209-residue chain is uncharacterized protein (209 aa).

Residues 177–209 (DNSDNSSDSDDSDSLDGSDDLNDSDNVDNLFVG) form a disordered region. Residues 183 to 202 (SDSDDSDSLDGSDDLNDSDN) show a composition bias toward acidic residues.

This is an uncharacterized protein from Acanthamoeba polyphaga (Amoeba).